A 161-amino-acid polypeptide reads, in one-letter code: Protein-export protein SecB (161 aa).

Positions 141 to 161 (KKQQETAGEQPDQPADTITRH) are disordered.

The protein belongs to the SecB family. As to quaternary structure, homotetramer, a dimer of dimers. One homotetramer interacts with 1 SecA dimer.

It localises to the cytoplasm. Functionally, one of the proteins required for the normal export of preproteins out of the cell cytoplasm. It is a molecular chaperone that binds to a subset of precursor proteins, maintaining them in a translocation-competent state. It also specifically binds to its receptor SecA. The sequence is that of Protein-export protein SecB from Nitrosomonas europaea (strain ATCC 19718 / CIP 103999 / KCTC 2705 / NBRC 14298).